Consider the following 266-residue polypeptide: ATP synthase subunit a (266 aa).

A run of 5 helical transmembrane segments spans residues 28–48, 88–108, 141–161, 206–226, and 237–257; these read SINV…LVIF, LIAP…MMDL, DVNI…FYSI, LFGN…LLPW, and AIFH…LTVV.

Belongs to the ATPase A chain family. In terms of assembly, F-type ATPases have 2 components, CF(1) - the catalytic core - and CF(0) - the membrane proton channel. CF(1) has five subunits: alpha(3), beta(3), gamma(1), delta(1), epsilon(1). CF(0) has three main subunits: a(1), b(2) and c(9-12). The alpha and beta chains form an alternating ring which encloses part of the gamma chain. CF(1) is attached to CF(0) by a central stalk formed by the gamma and epsilon chains, while a peripheral stalk is formed by the delta and b chains.

It is found in the cell inner membrane. In terms of biological role, key component of the proton channel; it plays a direct role in the translocation of protons across the membrane. This Pectobacterium atrosepticum (strain SCRI 1043 / ATCC BAA-672) (Erwinia carotovora subsp. atroseptica) protein is ATP synthase subunit a.